The sequence spans 282 residues: Inositol oxygenase (282 aa).

Residues 1-25 (MKDPDPSQVYRPDMDPEAAKDKGSF) are disordered. Positions 12–24 (PDMDPEAAKDKGS) are enriched in basic and acidic residues. A substrate-binding site is contributed by arginine 26. Serine 30 is subject to Phosphoserine. 82–84 (DES) is a binding site for substrate. The Fe cation site is built by histidine 95, histidine 120, and aspartate 121. Substrate contacts are provided by residues lysine 124 and 138 to 139 (GD). Residues histidine 191, histidine 217, and aspartate 250 each coordinate Fe cation. Substrate is bound at residue 217–218 (HS).

Belongs to the myo-inositol oxygenase family. The cofactor is Fe cation. The N-terminus is blocked. Kidney specific.

Its subcellular location is the cytoplasm. The catalysed reaction is myo-inositol + O2 = D-glucuronate + H2O + H(+). The protein operates within polyol metabolism; myo-inositol degradation into D-glucuronate; D-glucuronate from myo-inositol: step 1/1. This is Inositol oxygenase (MIOX) from Sus scrofa (Pig).